The sequence spans 97 residues: Transcription and mRNA export factor SUS1 (97 aa).

Belongs to the ENY2 family. Component of the nuclear pore complex (NPC)-associated TREX-2 complex (transcription and export complex 2), composed of at least SUS1, SAC3, THP1, SEM1, and CDC31. TREX-2 contains 2 SUS1 chains. The TREX-2 complex interacts with the nucleoporin NUP1. Component of the 1.8 MDa SAGA transcription coactivator-HAT complex. SAGA is built of 5 distinct domains with specialized functions. Within the SAGA complex, SUS1, SGF11, SGF73 and UBP8 form an additional subcomplex of SAGA called the DUB module (deubiquitination module). Interacts directly with THP1, SAC3, SGF11, and with the RNA polymerase II.

The protein resides in the nucleus. It is found in the nucleoplasm. The protein localises to the cytoplasm. Its subcellular location is the P-body. Involved in mRNA export coupled transcription activation by association with both the TREX-2 and the SAGA complexes. At the promoters, SAGA is required for recruitment of the basal transcription machinery. It influences RNA polymerase II transcriptional activity through different activities such as TBP interaction and promoter selectivity, interaction with transcription activators, and chromatin modification through histone acetylation and deubiquitination. Within the SAGA complex, participates in a subcomplex required for deubiquitination of H2B and for the maintenance of steady-state H3 methylation levels. The TREX-2 complex functions in docking export-competent ribonucleoprotein particles (mRNPs) to the nuclear entrance of the nuclear pore complex (nuclear basket). TREX-2 participates in mRNA export and accurate chromatin positioning in the nucleus by tethering genes to the nuclear periphery. May also be involved in cytoplasmic mRNA decay by interaction with components of P-bodies. The polypeptide is Transcription and mRNA export factor SUS1 (Meyerozyma guilliermondii (strain ATCC 6260 / CBS 566 / DSM 6381 / JCM 1539 / NBRC 10279 / NRRL Y-324) (Yeast)).